Here is an 800-residue protein sequence, read N- to C-terminus: Probable inorganic carbon transporter subunit DabA (800 aa).

Zn(2+) is bound by residues cysteine 329, aspartate 331, histidine 488, and cysteine 503.

The protein belongs to the inorganic carbon transporter (TC 9.A.2) DabA family. Forms a complex with DabB. The cofactor is Zn(2+).

It localises to the cell inner membrane. Functionally, part of an energy-coupled inorganic carbon pump. This chain is Probable inorganic carbon transporter subunit DabA, found in Roseobacter denitrificans (strain ATCC 33942 / OCh 114) (Erythrobacter sp. (strain OCh 114)).